Here is a 479-residue protein sequence, read N- to C-terminus: UDP-N-acetylmuramate--L-alanine ligase (479 aa).

124 to 130 (GSHGKTT) is an ATP binding site.

Belongs to the MurCDEF family.

Its subcellular location is the cytoplasm. The enzyme catalyses UDP-N-acetyl-alpha-D-muramate + L-alanine + ATP = UDP-N-acetyl-alpha-D-muramoyl-L-alanine + ADP + phosphate + H(+). The protein operates within cell wall biogenesis; peptidoglycan biosynthesis. Functionally, cell wall formation. This chain is UDP-N-acetylmuramate--L-alanine ligase, found in Synechococcus sp. (strain RCC307).